Here is a 314-residue protein sequence, read N- to C-terminus: Small ribosomal subunit protein RACK1 (314 aa).

A Phosphothreonine modification is found at T10. The stretch at 13–44 (GHSGWVTSLSTAPENPDILLSGSRDKSIILWN) is one WD 1 repeat. The residue at position 39 (S39) is a Phosphoserine. A Phosphotyrosine modification is found at Y52. WD repeat units follow at residues 61 to 91 (GHSHFVSDCALSFDSHYALSASWDKTIRLWD), 103 to 133 (GHTSDVLSVSISPDNRQVVSGSRDKTIKIWN), 146 to 178 (GHSDWVSCVRFSPNPDNLTFVSAGWDKAVKVWD), 190 to 220 (GHTGYVSAVTISPDGSLCASGGRDGTLMLWD), 231 to 260 (EAKANINALVFSPNRYWLCAATGSSIRIFD), and 281 to 311 (SSEPECISLTWSPDGQTLFSGWTDNLIRVWQ). At S148 the chain carries Phosphoserine. S242 and S255 each carry phosphoserine.

The protein belongs to the WD repeat G protein beta family. Ribosomal protein RACK1 subfamily. Component of the small ribosomal subunit (SSU). Mature yeast ribosomes consist of a small (40S) and a large (60S) subunit. The 40S small subunit contains 1 molecule of ribosomal RNA (18S rRNA) and at least 33 different proteins. The large 60S subunit contains 3 rRNA molecules (25S, 5.8S and 5S rRNA) and at least 46 different proteins. RACK1 is located at the head of the SSU in the vicinity of the mRNA exit channel. RACK1 interacts with the mRNA-binding protein SCP16. RACK1 also exists simultaneously as a homodimer in a cytosolic non-ribosome-bound form. Interacts with pck2. Interacts with pat1/ran1.

The protein localises to the cytoplasm. Its subcellular location is the membrane. Component of the ribosome, a large ribonucleoprotein complex responsible for the synthesis of proteins in the cell. The small ribosomal subunit (SSU) binds messenger RNAs (mRNAs) and translates the encoded message by selecting cognate aminoacyl-transfer RNA (tRNA) molecules. The large subunit (LSU) contains the ribosomal catalytic site termed the peptidyl transferase center (PTC), which catalyzes the formation of peptide bonds, thereby polymerizing the amino acids delivered by tRNAs into a polypeptide chain. The nascent polypeptides leave the ribosome through a tunnel in the LSU and interact with protein factors that function in enzymatic processing, targeting, and the membrane insertion of nascent chains at the exit of the ribosomal tunnel. Located at the head of the 40S ribosomal subunit in the vicinity of the mRNA exit channel, RACK1 serves as a scaffold protein that can recruit other proteins to the ribosome. Involved in induction of the ribosome quality control (RQC) pathway; a pathway that degrades nascent peptide chains during problematic translation. Involved in the negative regulation of translation of a specific subset of proteins. May be a receptor for protein kinase C in the regulation of actin cytoskeleton organization during cell wall synthesis and morphogenesis. Involved in the control of G2/M transition. May function as an anchoring protein for pat1/ran1 kinase. Negatively regulates the cell integrity transduction pathway by favoring translation of the tyrosine-phosphatases pyp1 and pyp2 that deactivate pmk1. Positively regulates the synthesis of the stress-responsive transcription factor Atf1 and the cytoplasmic catalase, a detoxificant enzyme induced by treatment with hydrogen peroxide. The sequence is that of Small ribosomal subunit protein RACK1 from Schizosaccharomyces pombe (strain 972 / ATCC 24843) (Fission yeast).